The primary structure comprises 136 residues: Salivary protein 15 Iric-2 (136 aa).

The signal sequence occupies residues 1 to 22; the sequence is MESFVAMKVVCIVLLFVIAAEA. Asn105 is a glycosylation site (N-linked (GlcNAc...) asparagine). The interval 117-136 is CD4-binding; it reads GPKNQTCENKDQCVPHIPGC.

The protein belongs to the salp15 family. In terms of assembly, interacts with host CD4. Interacts with host DC-SIGN (CD209). Interacts with Borrelia outer surface protein C (OspC). In terms of tissue distribution, expressed in salivary glands. Detected in fed adult female.

The protein resides in the secreted. Functionally, salivary tick protein that downregulates host immune system by binding to both dendritic cells, and CD4(+) T cells. Specifically binds to the CD4 coreceptor on T cells. This interaction prevents the activation of the Src kinase, Lck, and its downstream substrate Zap-70, and results in deficient activation of PLCgamma1, the repression of calcium fluxes triggered by T-cell antigen receptor (TCR) ligation, and a subsequent reduction in interleukin-2 production. This salivary protein also binds to DC-SIGN (CD209) on dendritic cells (DC) and activates the Raf-1 kinase/MEK signaling pathway that results in down-regulating expression of pro-inflammatory cytokines. Furthermore, it inhibits T cell proliferation induced by DCs. In addition, it inhibits in vitro keratinocyte inflammation induced by Borrelia burgdorferi or by the major outer surface protein (OspC) of Borrelia. In addition, it downregulates chemokines and monocyte chemoattractant protein 1, as well as several antimicrobial peptides such as defensins, cathelicidin, psoriasin, and RNase 7. Apart from its immunomodulatory activities, it is also associated with protection of Borrelia spirochetes from antibody-mediated killing through its binding to OspC. In vivo, tests on different immune disease animal models show promising therapeutic results, e.g., in inhibiting HIV infection, experimental autoimmune encephalomyelitis, transplantation rejection, and asthma. The protein is Salivary protein 15 Iric-2 of Ixodes ricinus (Common tick).